The following is a 177-amino-acid chain: Actinorhodin polyketide dimerase (177 aa).

The protein to S.pristinaespiralis SnaC.

The protein operates within antibiotic biosynthesis; actinorhodin biosynthesis. This chain is Actinorhodin polyketide dimerase (actVB), found in Streptomyces coelicolor (strain ATCC BAA-471 / A3(2) / M145).